A 122-amino-acid chain; its full sequence is MNFIRENETKYVLSTYQSMTPKNLMEYLLKYNYDNDCVYIFNNLPKDLQKEVDDLAKEVVKANDEQIKAQDEQIKANDQKLKQLDVMIEFMKQYNKQLDNDIYLLEHQLENKRELNRQLGIF.

Positions 46 to 116 (KDLQKEVDDL…HQLENKRELN (71 aa)) form a coiled coil.

This is an uncharacterized protein from Invertebrate iridescent virus 6 (IIV-6).